The sequence spans 932 residues: Protein translocase subunit SecA (932 aa).

ATP is bound by residues Q83, 101–105, and D491; that span reads GEGKT.

Belongs to the SecA family. In terms of assembly, monomer and homodimer. Part of the essential Sec protein translocation apparatus which comprises SecA, SecYEG and auxiliary proteins SecDF. Other proteins may also be involved.

Its subcellular location is the cell inner membrane. The protein localises to the cellular thylakoid membrane. It localises to the cytoplasm. The catalysed reaction is ATP + H2O + cellular proteinSide 1 = ADP + phosphate + cellular proteinSide 2.. In terms of biological role, part of the Sec protein translocase complex. Interacts with the SecYEG preprotein conducting channel. Has a central role in coupling the hydrolysis of ATP to the transfer of proteins into and across the cell membrane, serving as an ATP-driven molecular motor driving the stepwise translocation of polypeptide chains across the membrane. Its function is as follows. Probably participates in protein translocation into and across both the cytoplasmic and thylakoid membranes in cyanobacterial cells. The sequence is that of Protein translocase subunit SecA from Cyanothece sp. (strain PCC 7425 / ATCC 29141).